A 342-amino-acid polypeptide reads, in one-letter code: tRNA-specific 2-thiouridylase MnmA (342 aa).

ATP contacts are provided by residues 6–13 (LLSGGVDS) and leucine 32. The Nucleophile role is filled by cysteine 92. A disulfide bridge connects residues cysteine 92 and cysteine 191. ATP is bound at residue glycine 116. Residues 138–140 (KDQ) form an interaction with tRNA region. Residue cysteine 191 is the Cysteine persulfide intermediate of the active site. An interaction with tRNA region spans residues 293 to 294 (RY).

Belongs to the MnmA/TRMU family.

The protein localises to the cytoplasm. It catalyses the reaction S-sulfanyl-L-cysteinyl-[protein] + uridine(34) in tRNA + AH2 + ATP = 2-thiouridine(34) in tRNA + L-cysteinyl-[protein] + A + AMP + diphosphate + H(+). In terms of biological role, catalyzes the 2-thiolation of uridine at the wobble position (U34) of tRNA, leading to the formation of s(2)U34. This Helicobacter pylori (strain ATCC 700392 / 26695) (Campylobacter pylori) protein is tRNA-specific 2-thiouridylase MnmA.